The chain runs to 801 residues: K(+)-insensitive pyrophosphate-energized proton pump (801 aa).

The next 5 helical transmembrane spans lie at 27–47 (VIVMVIGVVALAALVVAGILV), 81–101 (TLGVFAVVVFFLLMLLPADDW), 109–129 (VFFLIGALFSATTGYTGMWLA), 170–190 (GVVGMFTVGLGLLGASCVVLV), and 201–221 (GFGLGAALIAMFMRVGGGIFT). Lys-222 contacts substrate. 4 residues coordinate Mg(2+): Asp-225, Asp-229, Asn-252, and Asp-255. 7 helical membrane passes run 261–281 (AGMAADLFESYAVTLVAALIL), 292–312 (AFPLIVPAIGVLTAMIGIFAV), 328–348 (GFFVSAVFSLALVAVAVYVYL), 372–392 (ILAMVAVAIGIVLAALIQQLT), 406–426 (IGKSSLTGAATVVLAGISVGL), 429–449 (AVYTALLIGLGVYGAFLLGGT), and 453–473 (LALFAVALAGTGLLTTVGVIV). Asp-483 lines the Mg(2+) pocket. 4 consecutive transmembrane segments (helical) span residues 515 to 535 (AITKGIAIATAVLAASALFGS), 571 to 591 (VGLIAGAAVVFLFSGLAINAV), 641 to 661 (LLAVLAPIAIGFTLGVGALGA), and 663 to 683 (LAGAIGTGTLMAVFLANSGGA). Ca(2+) contacts are provided by Asp-685, Asp-711, and Asp-715. A substrate-binding site is contributed by Lys-718. 2 helical membrane-spanning segments follow: residues 724–744 (AINPLLKVMNLVALLIAPAVV) and 754–774 (LGVRIAIAVLSILVIVGAVYI).

This sequence belongs to the H(+)-translocating pyrophosphatase (TC 3.A.10) family. K(+)-insensitive subfamily. Homodimer. It depends on Mg(2+) as a cofactor.

It localises to the cell membrane. It catalyses the reaction diphosphate + H2O + H(+)(in) = 2 phosphate + 2 H(+)(out). Functionally, proton pump that utilizes the energy of pyrophosphate hydrolysis as the driving force for proton movement across the membrane. Generates a proton motive force. This Streptomyces avermitilis (strain ATCC 31267 / DSM 46492 / JCM 5070 / NBRC 14893 / NCIMB 12804 / NRRL 8165 / MA-4680) protein is K(+)-insensitive pyrophosphate-energized proton pump.